Reading from the N-terminus, the 265-residue chain is tRNA (guanine-N(1)-)-methyltransferase (265 aa).

S-adenosyl-L-methionine contacts are provided by residues G110 and 129–134; that span reads LGDFVM. The segment at 243-265 is disordered; sequence LAAWGAPPPPLPKRRRGAKPNPN. Residues 254–265 show a composition bias toward basic residues; it reads PKRRRGAKPNPN.

Belongs to the RNA methyltransferase TrmD family. In terms of assembly, homodimer.

The protein resides in the cytoplasm. The catalysed reaction is guanosine(37) in tRNA + S-adenosyl-L-methionine = N(1)-methylguanosine(37) in tRNA + S-adenosyl-L-homocysteine + H(+). Its function is as follows. Specifically methylates guanosine-37 in various tRNAs. The protein is tRNA (guanine-N(1)-)-methyltransferase of Deinococcus geothermalis (strain DSM 11300 / CIP 105573 / AG-3a).